Reading from the N-terminus, the 96-residue chain is Large ribosomal subunit protein uL23 (96 aa).

This sequence belongs to the universal ribosomal protein uL23 family. Part of the 50S ribosomal subunit. Contacts protein L29, and trigger factor when it is bound to the ribosome.

In terms of biological role, one of the early assembly proteins it binds 23S rRNA. One of the proteins that surrounds the polypeptide exit tunnel on the outside of the ribosome. Forms the main docking site for trigger factor binding to the ribosome. This chain is Large ribosomal subunit protein uL23, found in Bacillus cereus (strain ATCC 10987 / NRS 248).